The following is a 349-amino-acid chain: 4-hydroxythreonine-4-phosphate dehydrogenase (349 aa).

Residue T135 coordinates substrate. A divalent metal cation is bound by residues H170, H215, and H276. Residues K284, N293, and R302 each contribute to the substrate site.

The protein belongs to the PdxA family. In terms of assembly, homodimer. Requires a divalent metal cation as cofactor.

Its subcellular location is the cytoplasm. The enzyme catalyses 4-(phosphooxy)-L-threonine + NAD(+) = 3-amino-2-oxopropyl phosphate + CO2 + NADH. It functions in the pathway cofactor biosynthesis; pyridoxine 5'-phosphate biosynthesis; pyridoxine 5'-phosphate from D-erythrose 4-phosphate: step 4/5. Its function is as follows. Catalyzes the NAD(P)-dependent oxidation of 4-(phosphooxy)-L-threonine (HTP) into 2-amino-3-oxo-4-(phosphooxy)butyric acid which spontaneously decarboxylates to form 3-amino-2-oxopropyl phosphate (AHAP). The polypeptide is 4-hydroxythreonine-4-phosphate dehydrogenase (Synechococcus sp. (strain JA-3-3Ab) (Cyanobacteria bacterium Yellowstone A-Prime)).